We begin with the raw amino-acid sequence, 345 residues long: Aurora kinase B (345 aa).

Positions 1–25 are disordered; the sequence is MAQKENAYPWPYGSKTSQSGLNTLS. Residues 14–25 are compositionally biased toward polar residues; the sequence is SKTSQSGLNTLS. Thr35 carries the post-translational modification Phosphothreonine. The disordered stretch occupies residues 50 to 77; the sequence is TAAPGQKLAENKSQGSTASQGSQNKQPF. The span at 60-77 shows a compositional bias: polar residues; that stretch reads NKSQGSTASQGSQNKQPF. Ser62 is subject to Phosphoserine. Residues 82-332 enclose the Protein kinase domain; that stretch reads FEIGRPLGKG…LAEVAAHPWV (251 aa). ATP is bound by residues 88–96 and Lys111; that span reads LGKGKFGNV. Asp205 functions as the Proton acceptor in the catalytic mechanism. An N6-acetyllysine modification is found at Lys220. The residue at position 232 (Ser232) is a Phosphoserine. Thr237 carries the post-translational modification Phosphothreonine; by autocatalysis.

Belongs to the protein kinase superfamily. Ser/Thr protein kinase family. Aurora subfamily. As to quaternary structure, component of the chromosomal passenger complex (CPC) composed of at least BIRC5/survivin, CDCA8/borealin, INCENP, AURKB or AURKC; predominantly independent AURKB- and AURKC-containing complexes exist. Associates with RACGAP1 during M phase. Interacts with SPDYC; this interaction may be required for proper localization of active, Thr-237-phosphorylated AURKB form during prometaphase and metaphase. Interacts with p53/TP53. Interacts (via the middle kinase domain) with NOC2L (via the N- and C-terminus domains). Interacts with CDCA1. Interacts with EVI5. Interacts with JTB. Interacts with NDC80. Interacts with PSMA3. Interacts with RNF2/RING1B. Interacts with SEPTIN1. Interacts with SIRT2. Interacts with TACC1. Interacts with TTC28. Post-translationally, the phosphorylation of Thr-237 requires the binding to INCENP and occurs by means of an autophosphorylation mechanism. Thr-237 phosphorylation is indispensable for the AURKB kinase activity. Acetylated at Lys-220 by KAT5 at kinetochores, increasing AURKB activity and promoting accurate chromosome segregation in mitosis. In terms of processing, ubiquitinated by different BCR (BTB-CUL3-RBX1) E3 ubiquitin ligase complexes. Ubiquitinated by the BCR(KLHL9-KLHL13) E3 ubiquitin ligase complex, ubiquitination leads to removal from mitotic chromosomes and is required for cytokinesis. During anaphase, the BCR(KLHL21) E3 ubiquitin ligase complex recruits the CPC complex from chromosomes to the spindle midzone and mediates the ubiquitination of AURKB. Ubiquitination of AURKB by BCR(KLHL21) E3 ubiquitin ligase complex may not lead to its degradation by the proteasome. Deubiquitinated by USP35; inhibiting CDH1-mediated degradation of AURKB. In terms of tissue distribution, expressed in testis, intestine and spleen. All of them are tissues that contain a large number of proliferating cells. Expressed during S phase, in a cell-cycle-dependent fashion.

It is found in the nucleus. It localises to the chromosome. The protein resides in the centromere. Its subcellular location is the kinetochore. The protein localises to the cytoplasm. It is found in the cytoskeleton. It localises to the spindle. The protein resides in the midbody. The catalysed reaction is L-seryl-[protein] + ATP = O-phospho-L-seryl-[protein] + ADP + H(+). The enzyme catalyses L-threonyl-[protein] + ATP = O-phospho-L-threonyl-[protein] + ADP + H(+). Its activity is regulated as follows. Activity is greatly increased when AURKB is within the CPC complex. In particular, AURKB-phosphorylated INCENP acts as an activator of AURKB. Positive feedback between HASPIN and AURKB contributes to CPC localization. Serine/threonine-protein kinase component of the chromosomal passenger complex (CPC), a complex that acts as a key regulator of mitosis. The CPC complex has essential functions at the centromere in ensuring correct chromosome alignment and segregation and is required for chromatin-induced microtubule stabilization and spindle assembly. Involved in the bipolar attachment of spindle microtubules to kinetochores and is a key regulator for the onset of cytokinesis during mitosis. Required for central/midzone spindle assembly and cleavage furrow formation. Key component of the cytokinesis checkpoint, a process required to delay abscission to prevent both premature resolution of intercellular chromosome bridges and accumulation of DNA damage: phosphorylates CHMP4C, leading to retain abscission-competent VPS4 (VPS4A and/or VPS4B) at the midbody ring until abscission checkpoint signaling is terminated at late cytokinesis. AURKB phosphorylates the CPC complex subunits BIRC5/survivin, CDCA8/borealin and INCENP. Phosphorylation of INCENP leads to increased AURKB activity. Other known AURKB substrates involved in centromeric functions and mitosis are CENPA, DES/desmin, GPAF, KIF2C, NSUN2, RACGAP1, SEPTIN1, VIM/vimentin, HASPIN, and histone H3. A positive feedback loop involving HASPIN and AURKB contributes to localization of CPC to centromeres. Phosphorylation of VIM controls vimentin filament segregation in cytokinetic process, whereas histone H3 is phosphorylated at 'Ser-10' and 'Ser-28' during mitosis (H3S10ph and H3S28ph, respectively). AURKB is also required for kinetochore localization of BUB1 and SGO1. Phosphorylation of p53/TP53 negatively regulates its transcriptional activity. Key regulator of active promoters in resting B- and T-lymphocytes: acts by mediating phosphorylation of H3S28ph at active promoters in resting B-cells, inhibiting RNF2/RING1B-mediated ubiquitination of histone H2A and enhancing binding and activity of the USP16 deubiquitinase at transcribed genes. Acts as an inhibitor of CGAS during mitosis: catalyzes phosphorylation of the N-terminus of CGAS during the G2-M transition, blocking CGAS liquid phase separation and activation, and thereby preventing CGAS-induced autoimmunity. Phosphorylates KRT5 during anaphase and telophase. Phosphorylates ATXN10 which promotes phosphorylation of ATXN10 by PLK1 and may play a role in the regulation of cytokinesis and stimulating the proteasomal degradation of ATXN10. This is Aurora kinase B (Aurkb) from Mus musculus (Mouse).